The sequence spans 554 residues: Perforin-1 (554 aa).

The signal sequence occupies residues 1–20 (MATCLFLLGLFLLLPRPVPA). 3 disulfides stabilise this stretch: Cys-22–Cys-75, Cys-30–Cys-72, and Cys-101–Cys-175. The 349-residue stretch at 26–374 (TRSECKQKHK…HYIMSRARWQ (349 aa)) folds into the MACPF domain. The chain crosses the membrane as a beta stranded span at residues 128 to 148 (WRVGLDVNPRPEANMRASVAG). The N-linked (GlcNAc...) asparagine glycan is linked to Asn-204. 4 disulfide bridges follow: Cys-241/Cys-407, Cys-376/Cys-392, Cys-380/Cys-394, and Cys-396/Cys-406. The chain crosses the membrane as a beta stranded span at residues 256–278 (CLNVEAQVSIGAQASVSSEYKAC). Residue Asn-375 is glycosylated (N-linked (GlcNAc...) asparagine). The region spanning 375–407 (NCSRPCRSGQHKSSHDSCQCECQDSKVTNQDCC) is the EGF-like domain. The C2 domain occupies 395–513 (ECQDSKVTNQ…FHEVTCELNH (119 aa)). Residues Gly-428, Asp-429, Thr-432, Ala-433, Asp-435, Asn-454, Glu-467, Asp-483, Ala-484, Asp-485, Trp-488, Asp-489, Asp-490, and Asp-491 each coordinate Ca(2+). 2 disulfide bridges follow: Cys-496–Cys-509 and Cys-524–Cys-533. N-linked (GlcNAc...) asparagine glycosylation occurs at Asn-548.

Belongs to the complement C6/C7/C8/C9 family. As to quaternary structure, monomer, as soluble protein. Homooligomer; homooligomerizes to form a pore-forming ring. It depends on Ca(2+) as a cofactor. Post-translationally, N-glycosylated. The glycosylation sites are facing the interior of the pore. Detected in cytotoxic T-lymphocytes and natural killer cells.

The protein resides in the cytolytic granule. Its subcellular location is the secreted. The protein localises to the cell membrane. It localises to the endosome lumen. Its function is as follows. Pore-forming protein that plays a key role in granzyme-mediated programmed cell death, and in defense against virus-infected or neoplastic cells. Can insert into the membrane of target cells in its calcium-bound form, oligomerize and form large pores. Promotes cytolysis and apoptosis of target cells by mediating the passage and uptake of cytotoxic granzymes. Facilitates the delivery of cationic cargo protein, while anionic or neural proteins are not delivered efficiently. Perforin pores allow the release of mature caspase-7 (CASP7) into the extracellular milieu. This chain is Perforin-1 (Prf1), found in Mus musculus (Mouse).